Consider the following 293-residue polypeptide: Aromatic amino acid exporter YddG (293 aa).

Over 1–6 (MTSQKA) the chain is Cytoplasmic. A helical transmembrane segment spans residues 7–27 (TLIGLVAIVLWSTMVGLIRGV). An EamA 1 domain is found at 15 to 137 (VLWSTMVGLI…IALTGVCWVL (123 aa)). Residues 28-33 (SEGLGP) lie on the Periplasmic side of the membrane. Residues 34-54 (VGGAAMIYSLSGLLLIFTVGL) form a helical membrane-spanning segment. Topologically, residues 55 to 63 (PDIRRFPGR) are cytoplasmic. Residues 64–84 (YLIAGSVLFVSYEICLALSLG) form a helical membrane-spanning segment. Residues 85–92 (YAATRHQA) lie on the Periplasmic side of the membrane. Residues 93-113 (IEVGMVNYLWPSLTILFAILF) form a helical membrane-spanning segment. The Cytoplasmic segment spans residues 114 to 119 (NGQKTN). Residues 120 to 140 (WLIVPGLLIALTGVCWVLGGE) form a helical membrane-spanning segment. The Periplasmic portion of the chain corresponds to 141 to 147 (NGLNPGE). The helical transmembrane segment at 148–168 (IISNVATSPLSYLLAFLGAFI) threads the bilayer. One can recognise an EamA 2 domain in the interval 167 to 285 (FIWATYCTVT…AVMVCVGSLL (119 aa)). Residues 169–182 (WATYCTVTNKYARG) are Cytoplasmic-facing. The chain crosses the membrane as a helical span at residues 183–203 (FNGITVFVLLTAVALWLHYFL). The Periplasmic portion of the chain corresponds to 204-207 (TPQP). Residues 208–228 (AMIFSLPVIAKLFTAALTLGF) form a helical membrane-spanning segment. Over 229-243 (AYAAWNVGILHGNVT) the chain is Cytoplasmic. Residues 244-264 (IMAVGSYFTPVMSSALAALLL) form a helical membrane-spanning segment. Over 265-267 (SSP) the chain is Periplasmic. A helical transmembrane segment spans residues 268 to 288 (LSFSFWQGAVMVCVGSLLCWL). The Cytoplasmic portion of the chain corresponds to 289–293 (ATRRR).

Belongs to the drug/metabolite transporter (DMT) superfamily. Aromatic amino acid/paraquat exporter (ArAA/P-E) (TC 2.A.7.17) family.

It is found in the cell inner membrane. Functionally, amino acid transporter with broad substrate specificity. Required for resistance to methyl viologen. May function with OmpD porin. The protein is Aromatic amino acid exporter YddG (yddG) of Salmonella typhimurium (strain 14028s / SGSC 2262).